The chain runs to 379 residues: Probable leucine aminopeptidase ARB_01443 (379 aa).

A signal peptide spans 1–18; the sequence is MKIATLAVVSAFAATAIA. Zn(2+) is bound by residues His182 and Asp201. Asn202 and Asn226 each carry an N-linked (GlcNAc...) asparagine glycan. 2 residues coordinate Zn(2+): Glu240 and Asp267. An intrachain disulfide couples Cys312 to Cys316. Zn(2+) is bound at residue His345.

This sequence belongs to the peptidase M28 family. M28E subfamily. In terms of assembly, monomer. Requires Zn(2+) as cofactor.

The protein resides in the secreted. Functionally, probable extracellular aminopeptidase which contributes to pathogenicity. In Arthroderma benhamiae (strain ATCC MYA-4681 / CBS 112371) (Trichophyton mentagrophytes), this protein is Probable leucine aminopeptidase ARB_01443.